The following is a 246-amino-acid chain: Protein phosphatase PhpP (246 aa).

The 239-residue stretch at 2 to 240 folds into the PPM-type phosphatase domain; sequence EISLLTDVGQ…DNITVALVSM (239 aa). Positions 36, 37, 192, and 231 each coordinate Mn(2+).

The protein belongs to the PP2C family. Requires Mn(2+) as cofactor.

It localises to the cytoplasm. The enzyme catalyses O-phospho-L-seryl-[protein] + H2O = L-seryl-[protein] + phosphate. It carries out the reaction O-phospho-L-threonyl-[protein] + H2O = L-threonyl-[protein] + phosphate. Functionally, protein phosphatase able to dephosphorylate StkP-P and other phosphorylated protein substrates. PhpP and its cognate protein kinase StkP appear to constitute a functional signaling couple in vivo, PhpP's primary role being probably to control phosphorylation levels of StkP and of its targets. PhpP thus performs an essential control of StkP activity. Also dephosphorylates DivIVA in vivo. This chain is Protein phosphatase PhpP (phpP), found in Streptococcus pneumoniae serotype 2 (strain D39 / NCTC 7466).